We begin with the raw amino-acid sequence, 538 residues long: Dolichol kinase (538 aa).

Topologically, residues 1–18 are lumenal; the sequence is MTRECAPPTPGSGAPLSG. Residues 19 to 39 traverse the membrane as a helical segment; sequence SVLAEAAVVFVVVLSIHAAVW. Residues 40–74 lie on the Cytoplasmic side of the membrane; sequence DRYSWCAVALAVQAFYVQYKWDRLLQQGSAVFQFR. Residues 75–95 traverse the membrane as a helical segment; the sequence is MSANSGLLPASVVMPLLGLVM. Over 96–111 the chain is Lumenal; sequence KERCQAAGNPYFERFG. A helical transmembrane segment spans residues 112 to 132; it reads IVVAATGMAVALFSSVLALGI. Residues 133–134 are Cytoplasmic-facing; that stretch reads TR. A helical transmembrane segment spans residues 135 to 155; it reads PVPTNTCVISGLAGGVIIYIM. The Lumenal portion of the chain corresponds to 156 to 163; that stretch reads KHSLSVGE. The chain crosses the membrane as a helical span at residues 164-184; it reads VIEVLEALLIFVYLNMILLYL. Residues 185–188 lie on the Cytoplasmic side of the membrane; that stretch reads LPRC. A helical transmembrane segment spans residues 189-209; it reads FTPGEALLVLGGISFMLNQLI. At 210 to 224 the chain is on the lumenal side; that stretch reads KRSLTVVESQGDPLD. A helical transmembrane segment spans residues 225-245; that stretch reads FFLLVVVVGMVLMGIFFSTLF. Residues 246–254 are Cytoplasmic-facing; the sequence is VFMDSGTWA. Residues 255-275 traverse the membrane as a helical segment; the sequence is SSIFFHLMTCVLGLGVVLPWL. Residues 276–297 lie on the Lumenal side of the membrane; that stretch reads HRLIRRNPLLWLFQFLFQTETR. The helical transmembrane segment at 298–318 threads the bilayer; sequence VYLLAYWCLLATVACLVVLYQ. Residues 319 to 337 are Cytoplasmic-facing; the sequence is NAKRSSSESKKHQAPTITR. The chain crosses the membrane as a helical span at residues 338 to 354; it reads KYFHFIVVATYIPGIIL. Residues 355–359 lie on the Lumenal side of the membrane; the sequence is DRPLL. The helical transmembrane segment at 360–380 threads the bilayer; sequence YVAATVCLAVFIFLEYVRYFR. Topologically, residues 381–401 are cytoplasmic; it reads IKPLGHTLRSLLSLFLDERDS. A helical transmembrane segment spans residues 402–422; sequence GPLILTHIYLLLGMSLPIWLV. Residues 423-436 are Lumenal-facing; the sequence is PRPCTQKGSLGGAR. Residues 437–457 traverse the membrane as a helical segment; sequence ALVPYAGVLAVGVGDTVASIF. Topologically, residues 458–472 are cytoplasmic; sequence GSTMGEIRWPGTKKT. A CTP-binding region spans residues 459–474; that stretch reads STMGEIRWPGTKKTFE. Residues 473 to 493 traverse the membrane as a helical segment; that stretch reads FEGTMTSIFAQIISVALILIF. The Lumenal portion of the chain corresponds to 494-495; sequence DS. Residues 496–516 traverse the membrane as a helical segment; sequence GVDLNYSYAWILGSISTVSLL. Residues 517-538 are Cytoplasmic-facing; sequence EAYTTQIDNLLLPLYLLILLMA.

It belongs to the polyprenol kinase family.

The protein resides in the endoplasmic reticulum membrane. It carries out the reaction a di-trans,poly-cis-dolichol + CTP = a di-trans,poly-cis-dolichyl phosphate + CDP + H(+). It participates in protein modification; protein glycosylation. Catalyzes CTP-mediated phosphorylation of dolichol, the terminal step in de novo dolichyl monophosphate (Dol-P) biosynthesis. Dol-P is a lipid carrier essential for the synthesis of N-linked and O-linked oligosaccharides and for GPI anchors. This Bos taurus (Bovine) protein is Dolichol kinase (DOLK).